Here is a 185-residue protein sequence, read N- to C-terminus: Pyruvate/ketoisovalerate oxidoreductases common subunit gamma (185 aa).

Heterotetramer of one alpha, one beta, one delta and one gamma chain.

The enzyme catalyses 2 oxidized [2Fe-2S]-[ferredoxin] + pyruvate + CoA = 2 reduced [2Fe-2S]-[ferredoxin] + acetyl-CoA + CO2 + H(+). The catalysed reaction is 3-methyl-2-oxobutanoate + 2 oxidized [2Fe-2S]-[ferredoxin] + CoA = 2-methylpropanoyl-CoA + 2 reduced [2Fe-2S]-[ferredoxin] + CO2 + H(+). This Pyrococcus furiosus (strain ATCC 43587 / DSM 3638 / JCM 8422 / Vc1) protein is Pyruvate/ketoisovalerate oxidoreductases common subunit gamma (porG).